The primary structure comprises 125 residues: Small ribosomal subunit protein uS13 (125 aa).

The segment at 97 to 125 (PVRGQKTRSNARTRKGPRPSRIKTKKKSS) is disordered. Basic residues predominate over residues 101-125 (QKTRSNARTRKGPRPSRIKTKKKSS).

It belongs to the universal ribosomal protein uS13 family. In terms of assembly, part of the 30S ribosomal subunit. Forms a loose heterodimer with protein S19. Forms two bridges to the 50S subunit in the 70S ribosome.

In terms of biological role, located at the top of the head of the 30S subunit, it contacts several helices of the 16S rRNA. In the 70S ribosome it contacts the 23S rRNA (bridge B1a) and protein L5 of the 50S subunit (bridge B1b), connecting the 2 subunits; these bridges are implicated in subunit movement. Contacts the tRNAs in the A and P-sites. The sequence is that of Small ribosomal subunit protein uS13 from Thermotoga maritima (strain ATCC 43589 / DSM 3109 / JCM 10099 / NBRC 100826 / MSB8).